We begin with the raw amino-acid sequence, 94 residues long: Co-chaperonin GroES (94 aa).

The protein belongs to the GroES chaperonin family. As to quaternary structure, heptamer of 7 subunits arranged in a ring. Interacts with the chaperonin GroEL.

Its subcellular location is the cytoplasm. In terms of biological role, together with the chaperonin GroEL, plays an essential role in assisting protein folding. The GroEL-GroES system forms a nano-cage that allows encapsulation of the non-native substrate proteins and provides a physical environment optimized to promote and accelerate protein folding. GroES binds to the apical surface of the GroEL ring, thereby capping the opening of the GroEL channel. This Alkaliphilus oremlandii (strain OhILAs) (Clostridium oremlandii (strain OhILAs)) protein is Co-chaperonin GroES.